We begin with the raw amino-acid sequence, 285 residues long: Dihydropteroate synthase (285 aa).

A Pterin-binding domain is found at 18–276 (PKIMGIVNLT…DVKATADALK (259 aa)). Residue N25 coordinates Mg(2+). Residues T66, D99, N119, D190, K229, and 264 to 266 (RVH) each bind (7,8-dihydropterin-6-yl)methyl diphosphate.

Belongs to the DHPS family. As to quaternary structure, homodimer. Mg(2+) is required as a cofactor.

The enzyme catalyses (7,8-dihydropterin-6-yl)methyl diphosphate + 4-aminobenzoate = 7,8-dihydropteroate + diphosphate. The protein operates within cofactor biosynthesis; tetrahydrofolate biosynthesis; 7,8-dihydrofolate from 2-amino-4-hydroxy-6-hydroxymethyl-7,8-dihydropteridine diphosphate and 4-aminobenzoate: step 1/2. Its function is as follows. Catalyzes the condensation of para-aminobenzoate (pABA) with 6-hydroxymethyl-7,8-dihydropterin diphosphate (DHPt-PP) to form 7,8-dihydropteroate (H2Pte), the immediate precursor of folate derivatives. This is Dihydropteroate synthase (folP) from Neisseria meningitidis serogroup B (strain ATCC BAA-335 / MC58).